Here is an 837-residue protein sequence, read N- to C-terminus: Tuftelin-interacting protein 11 (837 aa).

Basic and acidic residues-rich tracts occupy residues 1 to 13 (MSLS…GEGH) and 44 to 64 (QTKE…EERP). 3 disordered regions span residues 1–21 (MSLS…DDER), 34–73 (EFNP…RARD), and 85–135 (LKKG…FAGG). The required for interaction with DHX15 stretch occupies residues 1–50 (MSLSHLYRDGEGHLDDDDDERENFEITDWDLQNEFNPNRQRHWQTKEEAT). 4 positions are modified to phosphoserine: serine 2, serine 59, serine 95, and serine 98. The span at 91–100 (EEADSEDSDA) shows a compositional bias: acidic residues. The span at 101-116 (EEKPVKQEDFPKDLGP) shows a compositional bias: basic and acidic residues. The residue at position 144 (serine 144) is a Phosphoserine. Residues 149-195 (TKGIGQKLLQKMGYVPGRGLGKNAQGIINPIEAKQRKGKGAVGAYGS) form the G-patch domain. A disordered region spans residues 183–236 (QRKGKGAVGAYGSERTTQSLQDFPVADSEEEAEEEFQKELSQWRKDPSGSKKKP). At serine 210 the chain carries Phosphoserine. A compositionally biased stretch (basic and acidic residues) spans 217 to 231 (EFQKELSQWRKDPSG). The Nuclear localization signal motif lies at 700-705 (VKDKFN). Positions 710-734 (IMNRAVSSNVGAYMQPGARENIAYL) are required for nuclear speckle localization.

Belongs to the TFP11/STIP family. As to quaternary structure, identified in the spliceosome C complex. Found in the Intron Large (IL) complex, a post-mRNA release spliceosomal complex containing the excised intron, U2, U5 and U6 snRNPs, and splicing factors. Interacts with TUFT1. Interacts with DHX15; indicative for a recruitment of DHX15 to the IL complex. Interacts with GCFC2.

The protein localises to the cytoplasm. The protein resides in the nucleus. Its function is as follows. Involved in pre-mRNA splicing, specifically in spliceosome disassembly during late-stage splicing events. Intron turnover seems to proceed through reactions in two lariat-intron associated complexes termed Intron Large (IL) and Intron Small (IS). In cooperation with DHX15 seems to mediate the transition of the U2, U5 and U6 snRNP-containing IL complex to the snRNP-free IS complex leading to efficient debranching and turnover of excised introns. May play a role in the differentiation of ameloblasts and odontoblasts or in the forming of the enamel extracellular matrix. The sequence is that of Tuftelin-interacting protein 11 (Tfip11) from Rattus norvegicus (Rat).